Consider the following 237-residue polypeptide: uncharacterized protein (237 aa).

One can recognise a GP-PDE domain in the interval 4 to 237 (QFLIAHRGYS…VKFQIAAQLY (234 aa)).

This sequence to glycerophosphoryl diester phosphodiesterases (EC 3.1.4.46). The protein to M.genitalium MG293.

This is an uncharacterized protein from Mycoplasma pneumoniae (strain ATCC 29342 / M129 / Subtype 1) (Mycoplasmoides pneumoniae).